The following is a 136-amino-acid chain: Large ribosomal subunit protein uL16 (136 aa).

It belongs to the universal ribosomal protein uL16 family. As to quaternary structure, part of the 50S ribosomal subunit.

In terms of biological role, binds 23S rRNA and is also seen to make contacts with the A and possibly P site tRNAs. The sequence is that of Large ribosomal subunit protein uL16 from Rickettsia canadensis (strain McKiel).